The following is a 387-amino-acid chain: Phosphoglycerate kinase (387 aa).

Residues 21-23 (DLN), Arg36, 59-62 (HLGR), Arg113, and Arg146 contribute to the substrate site. Residues Lys197, Glu314, and 340-343 (GGDT) each bind ATP.

This sequence belongs to the phosphoglycerate kinase family. As to quaternary structure, monomer.

Its subcellular location is the cytoplasm. The catalysed reaction is (2R)-3-phosphoglycerate + ATP = (2R)-3-phospho-glyceroyl phosphate + ADP. The protein operates within carbohydrate degradation; glycolysis; pyruvate from D-glyceraldehyde 3-phosphate: step 2/5. In Yersinia enterocolitica serotype O:8 / biotype 1B (strain NCTC 13174 / 8081), this protein is Phosphoglycerate kinase.